Reading from the N-terminus, the 89-residue chain is Small ribosomal subunit protein bS20 (89 aa).

This sequence belongs to the bacterial ribosomal protein bS20 family.

In terms of biological role, binds directly to 16S ribosomal RNA. This chain is Small ribosomal subunit protein bS20, found in Helicobacter pylori (strain P12).